A 340-amino-acid chain; its full sequence is MIILAVESSCDETGVGIAELGDDGTVTLLADEVASSVDEHARFGGVVPEIASRAHLEALGPTMRRALATAGVSKPDVVAATIGPGLAGALLVGVAAAKAYSAAWQVPFYAVNHLGGHLAADVFDHGPLPESIGLLVSGGHTHLLHVRSLGEPIVELGSTVDDAAGEAYDKIARLLGLGYPGGRVLDELAREGDPAAITFPRGMTGPRDDPYAFSFSGLKTAVARYVESHPEASQADVAAGFQEAVADVLTAKAVRAAKDLGVSTLLIAGGVAANSRLRELAGQRCADAGMTLRIPRPRLCTDNGAMIASFAAHLIAAGARPSPLDAASDPGLPVVQGQVA.

Residues histidine 113 and histidine 117 each contribute to the Fe cation site. Substrate is bound by residues 135 to 139 (LVSGG), aspartate 169, glycine 182, aspartate 186, and asparagine 274. Aspartate 302 lines the Fe cation pocket.

The protein belongs to the KAE1 / TsaD family. Requires Fe(2+) as cofactor.

It is found in the cytoplasm. The catalysed reaction is L-threonylcarbamoyladenylate + adenosine(37) in tRNA = N(6)-L-threonylcarbamoyladenosine(37) in tRNA + AMP + H(+). In terms of biological role, required for the formation of a threonylcarbamoyl group on adenosine at position 37 (t(6)A37) in tRNAs that read codons beginning with adenine. Is involved in the transfer of the threonylcarbamoyl moiety of threonylcarbamoyl-AMP (TC-AMP) to the N6 group of A37, together with TsaE and TsaB. TsaD likely plays a direct catalytic role in this reaction. The protein is tRNA N6-adenosine threonylcarbamoyltransferase of Mycolicibacterium vanbaalenii (strain DSM 7251 / JCM 13017 / BCRC 16820 / KCTC 9966 / NRRL B-24157 / PYR-1) (Mycobacterium vanbaalenii).